The chain runs to 319 residues: Homoserine O-acetyltransferase (319 aa).

Cysteine 142 functions as the Acyl-thioester intermediate in the catalytic mechanism. 2 residues coordinate substrate: lysine 163 and serine 192. Histidine 235 (proton acceptor) is an active-site residue. Glutamate 237 is a catalytic residue. Arginine 249 provides a ligand contact to substrate.

It belongs to the MetA family.

Its subcellular location is the cytoplasm. The catalysed reaction is L-homoserine + acetyl-CoA = O-acetyl-L-homoserine + CoA. It functions in the pathway amino-acid biosynthesis; L-methionine biosynthesis via de novo pathway; O-acetyl-L-homoserine from L-homoserine: step 1/1. Its function is as follows. Transfers an acetyl group from acetyl-CoA to L-homoserine, forming acetyl-L-homoserine. This is Homoserine O-acetyltransferase from Lactococcus lactis subsp. cremoris (strain MG1363).